The following is a 236-amino-acid chain: MKFSEECRSAAAEWWEGSFVHPFVQGIGDGTLPIDRFKYYVLQDSYYLTHFAKVQSFGAAYAKDLYTTGRMASHAQGTYEAEMALHREFAELLEISEEERKAFKPSPTAYSYTSHMYRSVLSGNFAEILAALLPCYWLYYEVGEKLLHCDPGHPIYQKWIGTYGGDWFRQQVEEQINRFDELAENSTEEVRAKMKENFVISSYYEYQFWGMAYRKEGWSDSAIKEVEECGASRHNG.

Position 44 (Asp-44) interacts with substrate. Residue Cys-135 is the Nucleophile of the active site. Tyr-139 and Tyr-163 together coordinate substrate. Glu-205 functions as the Proton donor in the catalytic mechanism.

Belongs to the TenA family. As to quaternary structure, homotetramer.

The enzyme catalyses 4-amino-5-aminomethyl-2-methylpyrimidine + H2O = 4-amino-5-hydroxymethyl-2-methylpyrimidine + NH4(+). It catalyses the reaction thiamine + H2O = 5-(2-hydroxyethyl)-4-methylthiazole + 4-amino-5-hydroxymethyl-2-methylpyrimidine + H(+). It functions in the pathway cofactor biosynthesis; thiamine diphosphate biosynthesis. Its function is as follows. Catalyzes an amino-pyrimidine hydrolysis reaction at the C5' of the pyrimidine moiety of thiamine compounds, a reaction that is part of a thiamine salvage pathway. Thus, catalyzes the conversion of 4-amino-5-aminomethyl-2-methylpyrimidine to 4-amino-5-hydroxymethyl-2-methylpyrimidine (HMP). To a lesser extent, is also able to catalyze the hydrolytic cleavage of thiamine; however, this thiaminase activity is unlikely to be physiologically relevant. Therefore, is involved in the regeneration of the thiamine pyrimidine from thiamine degraded products present in the environment, rather than in thiamine degradation. The protein is Aminopyrimidine aminohydrolase of Bacillus subtilis (strain 168).